We begin with the raw amino-acid sequence, 287 residues long: uncharacterized protein (287 aa).

GTP is bound by residues 43 to 50, 90 to 93, and 156 to 159; these read GKTGVGKS, DLPG, and DKAE. A G domain is found at 48-138; it reads GKSSLCNALF…LTVDEHFYHQ (91 aa).

To E.coli YfjP and YeeP.

This is an uncharacterized protein from Escherichia coli (strain K12).